The chain runs to 492 residues: Catalase isozyme B (492 aa).

The segment at 1–20 (MDPYKHRPSSGSNSTFWTTN) is disordered. A compositionally biased stretch (polar residues) spans 9 to 20 (SSGSNSTFWTTN). Residue arginine 62 coordinates heme. The active site involves histidine 65. Arginine 102 contributes to the heme binding site. Residue asparagine 138 is part of the active site. Residue phenylalanine 151 participates in heme binding. Residue tyrosine 210 is modified to Phosphotyrosine. A cross-link (3-(S-cysteinyl)-tyrosine (Cys-Tyr)) is located at residues 325–348 (CPAIIVPGIHYSDDKLLQTRIFSY). Arginine 344, tyrosine 348, and arginine 355 together coordinate heme. The Peroxisome targeting signal signature appears at 484-492 (SRLNLKPNM).

Belongs to the catalase family. In terms of assembly, homotetramer. Interacts with GLO1 and GLO4; these interactions are disturbed by alpha-hydroxy-2-pyridinemethanesulfonic acid (HPMS) and salicylic acid (SA). Interacts with STRK1 at the plasma membrane. Requires heme as cofactor. As to expression, predominantly expressed in roots and, at low levels, in leaves (e.g. sheaths). Detected in seeds. Also present in panicles and culms. Observed in stems and anthers.

It localises to the peroxisome. Its subcellular location is the glyoxysome. It is found in the cell membrane. It carries out the reaction 2 H2O2 = O2 + 2 H2O. Strongly inhibited by beta-mercaptoethanol, sodium azide and potassium cyanide. Slightly repressed by 3-amino-1,2,4-triazole (3-AT). Activity is repressed proportionally to increased concentration of NaCl, KCl, LiCl and MgCl(2). Functionally, occurs in almost all aerobically respiring organisms and serves to protect cells from the toxic effects of hydrogen peroxide. May prevent the excessive accumulation of H(2)O(2) during water stress in response to the accumulation of abscisic acid (ABA). Involved in the modulation of ROS levels related to root growth regulation. Required for pollen viability and floret fertility upon heat stress (HS) by detoxifying reactive oxygen species (ROS) and malondialdehyde (MDA) accumulation in developing anthers exposed to HS. In Oryza sativa subsp. japonica (Rice), this protein is Catalase isozyme B (CATB).